The primary structure comprises 641 residues: Mediator of RNA polymerase II transcription subunit 17 (641 aa).

The stretch at 159 to 186 (RLQSFNAAADKLLKSAARLETEVASETR) forms a coiled coil.

Belongs to the Mediator complex subunit 17 family. In terms of assembly, component of the Mediator complex.

The protein localises to the nucleus. Functionally, component of the Mediator complex, a coactivator involved in the regulated transcription of nearly all RNA polymerase II-dependent genes. Mediator functions as a bridge to convey information from gene-specific regulatory proteins to the basal RNA polymerase II transcription machinery. Mediator is recruited to promoters by direct interactions with regulatory proteins and serves as a scaffold for the assembly of a functional preinitiation complex with RNA polymerase II and the general transcription factors. The chain is Mediator of RNA polymerase II transcription subunit 17 (srb4) from Aspergillus clavatus (strain ATCC 1007 / CBS 513.65 / DSM 816 / NCTC 3887 / NRRL 1 / QM 1276 / 107).